A 199-amino-acid polypeptide reads, in one-letter code: RNA-binding protein, mRNA-processing factor 2a (199 aa).

Positions 20 to 97 (RTLFVSGLPV…QTLRLEFAKA (78 aa)) constitute an RRM domain.

As to quaternary structure, interacts with Bucky ball (BUC); to mediate Balbiani body formation and oocyte polarity during early oogenesis.

Its subcellular location is the cytoplasm. It is found in the nucleus. The protein resides in the stress granule. Its function is as follows. RNA-binding protein involved in the regulation of smooth muscle cell differentiation and proliferation in the gastrointestinal system. RNA-binding protein localized in Balbiani body (electron-dense aggregates in the oocyte) and germ plasm during oogenesis, and may be required to maintain germ plasm mRNA translational repression. Translational regulator during topographic map formation in the visual system. Establishes oocyte polarity through interaction with Bucky ball (BUC). Acts as a pre-mRNA alternative splicing regulator. Mediates ACTN1 and FLNB alternative splicing. Likely binds to mRNA tandem CAC trinucleotide or CA dinucleotide motifs. This chain is RNA-binding protein, mRNA-processing factor 2a, found in Danio rerio (Zebrafish).